A 507-amino-acid chain; its full sequence is ATP synthase subunit alpha, chloroplastic (507 aa).

170 to 177 (GDRQTGKT) is an ATP binding site.

It belongs to the ATPase alpha/beta chains family. F-type ATPases have 2 components, CF(1) - the catalytic core - and CF(0) - the membrane proton channel. CF(1) has five subunits: alpha(3), beta(3), gamma(1), delta(1), epsilon(1). CF(0) has four main subunits: a, b, b' and c.

It localises to the plastid. The protein resides in the chloroplast thylakoid membrane. It carries out the reaction ATP + H2O + 4 H(+)(in) = ADP + phosphate + 5 H(+)(out). Functionally, produces ATP from ADP in the presence of a proton gradient across the membrane. The alpha chain is a regulatory subunit. The protein is ATP synthase subunit alpha, chloroplastic of Ceratophyllum demersum (Rigid hornwort).